Here is a 130-residue protein sequence, read N- to C-terminus: Protein NrdI (130 aa).

It belongs to the NrdI family.

Its function is as follows. Probably involved in ribonucleotide reductase function. This Staphylococcus carnosus (strain TM300) protein is Protein NrdI.